The following is a 450-amino-acid chain: tRNA (guanine-N(7)-)-methyltransferase non-catalytic subunit TRM82 (450 aa).

Residues 69-82 are compositionally biased toward basic and acidic residues; that stretch reads AAKKLKTNEGEAIE. A disordered region spans residues 69–103; the sequence is AAKKLKTNEGEAIERPGNQRRVPLPGKDPKVPVPG. 3 WD repeats span residues 108–147, 200–241, and 245–285; these read PVYQ…KDNC, GHVS…VIDK, and GHKE…LMSS.

The protein belongs to the WD repeat TRM82 family. In terms of assembly, forms a heterodimer with the catalytic subunit TRM8.

The protein localises to the nucleus. It functions in the pathway tRNA modification; N(7)-methylguanine-tRNA biosynthesis. Its function is as follows. Required for the formation of N(7)-methylguanine at position 46 (m7G46) in tRNA. In the complex, it is required to stabilize and induce conformational changes of the catalytic subunit. This is tRNA (guanine-N(7)-)-methyltransferase non-catalytic subunit TRM82 from Eremothecium gossypii (strain ATCC 10895 / CBS 109.51 / FGSC 9923 / NRRL Y-1056) (Yeast).